The following is a 383-amino-acid chain: uncharacterized protein (383 aa).

This sequence belongs to the peptidase M20 family.

This is an uncharacterized protein from Staphylococcus epidermidis (strain ATCC 12228 / FDA PCI 1200).